Here is a 1307-residue protein sequence, read N- to C-terminus: TBC1 domain family member 4 (1307 aa).

Methionine 1 carries the N-acetylmethionine modification. Positions 1–30 are disordered; the sequence is MESPSCIQDEPFPHPLEPEPSAPAQPGATK. Positions 13 to 23 are enriched in pro residues; that stretch reads PHPLEPEPSAP. Residues 53 to 209 form the PID 1 domain; sequence PMLPWLMAEI…QKFEVLYCGR (157 aa). Over residues 237–246 the composition is skewed to basic and acidic residues; that stretch reads LKLQGERGGD. Residues 237-276 are disordered; that stretch reads LKLQGERGGDPGDEMGVLEVESPVSPDDSLPEKADGTVNS. Phosphoserine occurs at positions 258, 261, and 320. The PID 2 domain maps to 319–475; the sequence is RSRCSSVTGV…HSLHKLCERI (157 aa). Serine 324 and serine 348 each carry phosphoserine; by PKB/AKT1. The segment at 330-360 is disordered; sequence QKKVHENNQKTQPRRRHASAPSHVQPSDSEK. Serine 351 is modified (phosphoserine). Lysine 484 is subject to N6-acetyllysine. The residue at position 573 (serine 573) is a Phosphoserine. At threonine 575 the chain carries Phosphothreonine. Serine 577 bears the Phosphoserine; by PKB/AKT1 mark. Position 584 is an omega-N-methylarginine (arginine 584). Serine 595 is modified (phosphoserine; by PKB/AKT1). A phosphoserine mark is found at serine 598 and serine 616. Disordered stretches follow at residues 603–684 and 732–774; these read NSLA…SEQC and SPQY…PVTP. Residues 615 to 624 are compositionally biased toward pro residues; that stretch reads DSPPGTPPAS. Threonine 620 carries the post-translational modification Phosphothreonine. Residue serine 624 is modified to Phosphoserine. Residue threonine 649 is modified to Phosphothreonine; by PKB/AKT1. Serine 673 carries the post-translational modification Phosphoserine. Residues 757–767 are compositionally biased toward polar residues; that stretch reads SSTCSNESLNA. Serine 758 is subject to Phosphoserine; by PKB/AKT1. Residues serine 761 and serine 764 each carry the phosphoserine modification. Phosphothreonine is present on threonine 770. In terms of domain architecture, Rab-GAP TBC spans 927–1121; it reads GVPKSRRGEI…RVFDIIFLQG (195 aa).

Post-translationally, phosphorylated by AKT1; insulin-induced. Also phosphorylated by AMPK in response to insulin. Insulin-stimulated phosphorylation is required for SLC2A4/GLUT4 translocation. Has no effect on SLC2A4/GLUT4 internalization. Widely expressed, including in pancreatic beta cells.

It localises to the cytoplasm. In terms of biological role, may act as a GTPase-activating protein for RAB2A, RAB8A, RAB10 and RAB14. Promotes insulin-induced glucose transporter SLC2A4/GLUT4 translocation at the plasma membrane, thus increasing glucose uptake. The polypeptide is TBC1 domain family member 4 (Tbc1d4) (Mus musculus (Mouse)).